A 218-amino-acid polypeptide reads, in one-letter code: Large ribosomal subunit protein uL4 (218 aa).

The tract at residues 46–102 (ARQGTHSTKTRGEVRGGGRKPFRQKGTGRARQGSIRAPHFTGGGISHGPKPRDYSQR) is disordered. Residues 62–73 (GGRKPFRQKGTG) show a composition bias toward basic residues.

Belongs to the universal ribosomal protein uL4 family. Part of the 50S ribosomal subunit.

One of the primary rRNA binding proteins, this protein initially binds near the 5'-end of the 23S rRNA. It is important during the early stages of 50S assembly. It makes multiple contacts with different domains of the 23S rRNA in the assembled 50S subunit and ribosome. Functionally, forms part of the polypeptide exit tunnel. The polypeptide is Large ribosomal subunit protein uL4 (Corynebacterium glutamicum (strain R)).